Reading from the N-terminus, the 374-residue chain is Glutamate 5-kinase (374 aa).

Lysine 16 serves as a coordination point for ATP. Residues serine 56, aspartate 143, and asparagine 155 each contribute to the substrate site. Residue 175 to 176 (TD) coordinates ATP. The 79-residue stretch at 282 to 360 (RGRVVLDAGA…SEIEAVLGYV (79 aa)) folds into the PUA domain.

The protein belongs to the glutamate 5-kinase family.

It localises to the cytoplasm. It carries out the reaction L-glutamate + ATP = L-glutamyl 5-phosphate + ADP. Its pathway is amino-acid biosynthesis; L-proline biosynthesis; L-glutamate 5-semialdehyde from L-glutamate: step 1/2. Catalyzes the transfer of a phosphate group to glutamate to form L-glutamate 5-phosphate. The sequence is that of Glutamate 5-kinase from Ralstonia nicotianae (strain ATCC BAA-1114 / GMI1000) (Ralstonia solanacearum).